Here is a 76-residue protein sequence, read N- to C-terminus: Putative antitoxin VapB2 (76 aa).

Belongs to the UPF0330 family.

In terms of biological role, possibly the antitoxin component of a type II toxin-antitoxin (TA) system. Its cognate toxin is VapC2 (Potential). The polypeptide is Putative antitoxin VapB2 (vapB2) (Pyrococcus abyssi (strain GE5 / Orsay)).